Consider the following 481-residue polypeptide: Cysteine--tRNA ligase (481 aa).

Cys-43 is a Zn(2+) binding site. Positions 45–55 (ATVQGLPHIGH) match the 'HIGH' region motif. Zn(2+) contacts are provided by Cys-221, His-246, and Glu-250. The 'KMSKS' region signature appears at 277–281 (KMSKS). Lys-280 provides a ligand contact to ATP.

This sequence belongs to the class-I aminoacyl-tRNA synthetase family. Monomer. Zn(2+) serves as cofactor.

It localises to the cytoplasm. The catalysed reaction is tRNA(Cys) + L-cysteine + ATP = L-cysteinyl-tRNA(Cys) + AMP + diphosphate. The sequence is that of Cysteine--tRNA ligase from Mycobacterium sp. (strain JLS).